The chain runs to 250 residues: UPF0758 protein tlr1707 (250 aa).

One can recognise an MPN domain in the interval 116–239 (TIIDSPALAA…YQSLREITPL (124 aa)). Positions 188, 190, and 201 each coordinate Zn(2+). Residues 188–201 (HNHPSGNLSPSQAD) carry the JAMM motif motif.

The protein belongs to the UPF0758 family.

The chain is UPF0758 protein tlr1707 from Thermosynechococcus vestitus (strain NIES-2133 / IAM M-273 / BP-1).